Consider the following 236-residue polypeptide: MSNSITLEERGESFQPRPITSFVRREGRMTPAQKKALEHLWPRYGIDLGTGPLNLAAIFNRQAERILEIGFGNGESLLQQARAAPERDFLGIEVYRPGIGHLLLRLKAEGLENIRVIHGDAWEVLQRALPNPSLDGVQIFFPDPWPKKRHHKRRLIQPSFVDLLERKIKPGGWFHLATDWQDYAEQIKAVLSQHAGFNQLTNEGQSTQRPRTKFEARGQQQGHGVWDLRFKRSVDS.

Positions 68, 93, 120, and 143 each coordinate S-adenosyl-L-methionine. Aspartate 143 is an active-site residue. Substrate is bound by residues lysine 147, aspartate 179, and 212–215 (TKFE).

It belongs to the class I-like SAM-binding methyltransferase superfamily. TrmB family.

The catalysed reaction is guanosine(46) in tRNA + S-adenosyl-L-methionine = N(7)-methylguanosine(46) in tRNA + S-adenosyl-L-homocysteine. Its pathway is tRNA modification; N(7)-methylguanine-tRNA biosynthesis. Functionally, catalyzes the formation of N(7)-methylguanine at position 46 (m7G46) in tRNA. This is tRNA (guanine-N(7)-)-methyltransferase from Nitrosococcus oceani (strain ATCC 19707 / BCRC 17464 / JCM 30415 / NCIMB 11848 / C-107).